We begin with the raw amino-acid sequence, 603 residues long: Elongation factor 4 (603 aa).

The region spanning 7-191 (SNIRNFSIVA…AIVTRLPPPK (185 aa)) is the tr-type G domain. GTP is bound by residues 19-24 (DHGKST) and 138-141 (NKVD).

The protein belongs to the TRAFAC class translation factor GTPase superfamily. Classic translation factor GTPase family. LepA subfamily.

It is found in the cell inner membrane. The enzyme catalyses GTP + H2O = GDP + phosphate + H(+). Functionally, required for accurate and efficient protein synthesis under certain stress conditions. May act as a fidelity factor of the translation reaction, by catalyzing a one-codon backward translocation of tRNAs on improperly translocated ribosomes. Back-translocation proceeds from a post-translocation (POST) complex to a pre-translocation (PRE) complex, thus giving elongation factor G a second chance to translocate the tRNAs correctly. Binds to ribosomes in a GTP-dependent manner. The polypeptide is Elongation factor 4 (Bradyrhizobium diazoefficiens (strain JCM 10833 / BCRC 13528 / IAM 13628 / NBRC 14792 / USDA 110)).